A 741-amino-acid chain; its full sequence is Zinc metalloproteinase nas-30 (741 aa).

Low complexity-rich tracts occupy residues 71-85 (KPAP…APAP) and 97-118 (PAPK…DAPP). Positions 71-122 (KPAPAAAGPRSAPAPTNEDYNTDIDVPAPKAKARAAPTPRRAQADAPPVYRQ) are disordered. Residues 324–516 (KVITGSVYRW…VKQVNRLYCN (193 aa)) enclose the Peptidase M12A domain. 6 cysteine pairs are disulfide-bonded: C364-C515, C385-C404, C519-C539, C541-C550, C562-C583, and C610-C630. H412 serves as a coordination point for Zn(2+). The active site involves E413. Residues H416 and H422 each contribute to the Zn(2+) site. An EGF-like domain is found at 539-550 (CKCPDGLGGKLC). The region spanning 550-648 (CGRAAKGTDH…ISDQSEALIL (99 aa)) is the CUB domain. The N-linked (GlcNAc...) asparagine glycan is linked to N633.

It depends on Zn(2+) as a cofactor.

Its function is as follows. Metalloprotease. The sequence is that of Zinc metalloproteinase nas-30 from Caenorhabditis elegans.